We begin with the raw amino-acid sequence, 349 residues long: Galactose-1-phosphate uridylyltransferase (349 aa).

Position 29–32 (29–32 (RAKR)) interacts with UDP-alpha-D-glucose. Zn(2+)-binding residues include Cys-53 and Cys-56. 78-79 (ND) lines the UDP-alpha-D-glucose pocket. Zn(2+) is bound at residue His-116. UDP-alpha-D-glucose is bound by residues Asn-154 and 160 to 162 (GCS). A Zn(2+)-binding site is contributed by His-165. Catalysis depends on His-167, which acts as the Tele-UMP-histidine intermediate. Residue Gln-169 coordinates UDP-alpha-D-glucose. Glu-183, His-282, His-297, and His-299 together coordinate Fe cation. Residues 312 to 313 (KF), 317 to 318 (YE), and Gln-324 contribute to the UDP-alpha-D-glucose site.

Belongs to the galactose-1-phosphate uridylyltransferase type 1 family. It depends on Zn(2+) as a cofactor.

The enzyme catalyses alpha-D-galactose 1-phosphate + UDP-alpha-D-glucose = alpha-D-glucose 1-phosphate + UDP-alpha-D-galactose. It participates in carbohydrate metabolism; galactose metabolism. The chain is Galactose-1-phosphate uridylyltransferase (galT) from Haemophilus influenzae (strain ATCC 51907 / DSM 11121 / KW20 / Rd).